We begin with the raw amino-acid sequence, 391 residues long: Ectodysplasin-A (391 aa).

The Cytoplasmic portion of the chain corresponds to 1-41 (MGYPEVERRELLPAAAPRERGSQGCGCGGAPARAGEGNSCL). Residues 42–62 (LFLGFFGLSLALHLLTLCCYL) form a helical; Signal-anchor for type II membrane protein membrane-spanning segment. Residues 63–391 (ELRSELRRER…AIRLGEAPAS (329 aa)) are Extracellular-facing. 2 disordered regions span residues 73 to 127 (GAES…HSDS) and 146 to 245 (YSEE…GTRE). Residues 86–101 (TSGTLSSLGGLDPDSP) show a composition bias toward low complexity. The span at 102–113 (ITSHLGQPSPKQ) shows a compositional bias: polar residues. Positions 180 to 229 (GPPGPNGPPGPPGPPGPQGPPGIPGIPGIPGTTVMGPPGPPGPPGPQGPP) constitute a Collagen-like domain. 2 stretches are compositionally biased toward pro residues: residues 181–203 (PPGP…PGIP) and 216–228 (PPGP…PQGP). The THD domain occupies 249-385 (AVVHLQGQGS…HTTFFGAIRL (137 aa)). Residue Asn313 is glycosylated (N-linked (GlcNAc...) asparagine). Cys332 and Cys346 are oxidised to a cystine. Asn372 carries N-linked (GlcNAc...) asparagine glycosylation.

This sequence belongs to the tumor necrosis factor family. In terms of assembly, homotrimer. The homotrimers may then dimerize and form higher-order oligomers. N-glycosylated. In terms of processing, processing by furin produces a secreted form. Not abundant; expressed in specific cell types of ectodermal (but not mesodermal) origin of keratinocytes, hair follicles, sweat glands. Also in adult heart, liver, muscle, pancreas, prostate, fetal liver, uterus, small intestine and umbilical cord.

The protein resides in the cell membrane. The protein localises to the secreted. Cytokine which is involved in epithelial-mesenchymal signaling during morphogenesis of ectodermal organs. Functions as a ligand activating the DEATH-domain containing receptors EDAR and EDA2R. May also play a role in cell adhesion. Its function is as follows. Binds only to the receptor EDAR, while isoform 3 binds exclusively to the receptor EDA2R. Functionally, binds only to the receptor EDA2R. The sequence is that of Ectodysplasin-A (EDA) from Homo sapiens (Human).